We begin with the raw amino-acid sequence, 358 residues long: DNA replication and repair protein RecF (358 aa).

30 to 37 (GANGSGKT) contributes to the ATP binding site.

This sequence belongs to the RecF family.

The protein resides in the cytoplasm. Its function is as follows. The RecF protein is involved in DNA metabolism; it is required for DNA replication and normal SOS inducibility. RecF binds preferentially to single-stranded, linear DNA. It also seems to bind ATP. The sequence is that of DNA replication and repair protein RecF from Acinetobacter baylyi (strain ATCC 33305 / BD413 / ADP1).